Here is a 120-residue protein sequence, read N- to C-terminus: Chaperonin GroEL (120 aa).

An ATP-binding site is contributed by 23 to 27 (DGTTT).

The protein belongs to the chaperonin (HSP60) family. In terms of assembly, forms a cylinder of 14 subunits composed of two heptameric rings stacked back-to-back. Interacts with the co-chaperonin GroES.

Its subcellular location is the cytoplasm. It catalyses the reaction ATP + H2O + a folded polypeptide = ADP + phosphate + an unfolded polypeptide.. Together with its co-chaperonin GroES, plays an essential role in assisting protein folding. The GroEL-GroES system forms a nano-cage that allows encapsulation of the non-native substrate proteins and provides a physical environment optimized to promote and accelerate protein folding. This chain is Chaperonin GroEL, found in Mycobacterium malmoense.